Reading from the N-terminus, the 97-residue chain is uncharacterized protein (97 aa).

2 disordered regions span residues 1–20 and 52–97; these read MTEG…IASD and VPAA…GRRA.

This is an uncharacterized protein from Paracoccus pantotrophus (Thiosphaera pantotropha).